Here is a 226-residue protein sequence, read N- to C-terminus: Killer cell lectin-like receptor subfamily E member 1 (226 aa).

The tract at residues 1-28 is disordered; sequence MDEAPVTRSTLNVNSQQKSKAKNKIKNT. The Cytoplasmic segment spans residues 1 to 68; sequence MDEAPVTRST…GKGNCSPPWR (68 aa). The span at 7–18 shows a compositional bias: polar residues; that stretch reads TRSTLNVNSQQK. The chain crosses the membrane as a helical; Signal-anchor for type II membrane protein span at residues 69-89; it reads LLSSVLGAMCLLLMAVAMVMT. Residues 90 to 226 lie on the Extracellular side of the membrane; the sequence is TFTTKSSSER…ANKLTYICKK (137 aa). Cystine bridges form between Cys113–Cys124, Cys141–Cys224, and Cys202–Cys216. One can recognise a C-type lectin domain in the interval 120 to 225; it reads FRCSCYFFSK…CANKLTYICK (106 aa). Asn145 carries an N-linked (GlcNAc...) asparagine glycan.

In terms of assembly, heterodimer; with KLRI1 or KLRI2. As to expression, expressed in natural killer (NK) cells (at protein level). Also detected in natural killer T (NKT) cells (at protein level). Has little or no expression in T cells (at protein level).

The protein resides in the cell membrane. Its function is as follows. Lectin-like receptor for natural killer (NK) cells. Can either inhibit or activate NK cell cytotoxic activity, depending on its binding partner. Heterodimer formation with KLRI1 mediates NK cell inhibition whereas heterodimer formation with KLRI2 mediates NK cell activation. Plays a role in allogeneic recognition by the immune system. This is Killer cell lectin-like receptor subfamily E member 1 from Mus musculus (Mouse).